The chain runs to 1142 residues: Potassium channel subfamily T member 2 (1142 aa).

Topologically, residues 1-63 are cytoplasmic; that stretch reads MVDLESEVPP…KNQRSSLRIR (63 aa). Residues 64 to 84 form a helical membrane-spanning segment; sequence LFNFSLKLLSCLLYIIRVLLE. The Extracellular segment spans residues 85 to 101; the sequence is KPSQGNDWSHIFWVNRS. Asn-99 carries N-linked (GlcNAc...) asparagine glycosylation. Residues 102 to 122 traverse the membrane as a helical segment; it reads LPLWGLQVSVALISLFETILL. Topologically, residues 123–137 are cytoplasmic; sequence GYLSYKGNIWEQILR. A helical membrane pass occupies residues 138–158; sequence VPFILEIINAVPFIISIFWPT. Topologically, residues 159–160 are extracellular; the sequence is LR. Residues 161 to 173 form a helical membrane-spanning segment; the sequence is NLFVPVFLNCWLA. At 174–198 the chain is on the cytoplasmic side; that stretch reads KHALENMINDLHRAIQRTQSAMFNQ. A helical transmembrane segment spans residues 199-219; the sequence is VLILISTLLCLIFTCICGIQH. At 220-228 the chain is on the extracellular side; that stretch reads LERIGKKLN. The segment at residues 229-249 is an intramembrane region (pore-forming); the sequence is LFDSLYFCIVTFSTVGFGDVT. The Extracellular portion of the chain corresponds to 250–256; that stretch reads PETWSSK. Residues 257 to 277 form a helical membrane-spanning segment; sequence LFVVAMICVALVVLPIQFEQL. Residues 278 to 1142 lie on the Cytoplasmic side of the membrane; it reads AYLWMERQKS…VQDSREETQL (865 aa). 2 RCK N-terminal domains span residues 299–435 and 725–865; these read EKHV…DHVV and NKLI…CYSL. 2 disordered regions span residues 989-1044 and 1118-1142; these read DTKD…EKIT and PNSEPSRKNSICNAAVQDSREETQL. A compositionally biased stretch (basic residues) spans 1017–1037; it reads LRRKSMQWARRLSRKGPKHSG. A compositionally biased stretch (polar residues) spans 1118 to 1129; the sequence is PNSEPSRKNSIC.

Belongs to the potassium channel family. Calcium-activated (TC 1.A.1.3) subfamily. KCa4.2/KCNT2 sub-subfamily. As to quaternary structure, homotetramer. Forms heteromer with KCNT1; heteromeric channels differ from those of homomeric channels in their unitary conductance, kinetic behavior, subcellular localization, and response to activation of protein kinase C. Post-translationally, phosphorylated by protein kinase C. Phosphorylation of the C-terminal domain inhibits channel activity. As to expression, detected in brain, and at low levels in heart. Detected in brainstem, including auditory neurons such as the medial nucleus of the trapezoid body. Detected in the olfactory bulb, red nucleus, facial nucleus, pontine nucleus, oculomotor nucleus, substantia nigra, deep cerebellar nuclei, vestibular nucleus, and the thalamus. Detected in hippocampal CA1, CA2, and CA3 regions, the dentate gyrus, supraoptic nucleus, hypothalamus, dorsal root ganglion, and cortical layers II, III, and V. Detected in striatum cholinergic interneurons.

The protein resides in the cell membrane. The catalysed reaction is K(+)(in) = K(+)(out). With respect to regulation, are normally in a closed state unless activated by an increase in intracellular Na(+) and Cl(-). Inhibited upon stimulation of G-protein coupled receptors, such as CHRM1 and GRM1. There is conflicting data about the effect of ATP on KNCT2 channels activity. Intracellular ATP was initially report to inhibit the channel activity. However, others studies conclude that KNCT2 channels are not inhibited by intracellular ATP. Sodium-activated and chloride-activated potassium channel. Produces rapidly activating outward rectifier K(+) currents. Contributes to regulate neuronal excitability. The sequence is that of Potassium channel subfamily T member 2 (Kcnt2) from Rattus norvegicus (Rat).